A 137-amino-acid polypeptide reads, in one-letter code: Putative pre-16S rRNA nuclease (137 aa).

This sequence belongs to the YqgF nuclease family.

The protein resides in the cytoplasm. Its function is as follows. Could be a nuclease involved in processing of the 5'-end of pre-16S rRNA. The sequence is that of Putative pre-16S rRNA nuclease from Bacillus cereus (strain B4264).